A 421-amino-acid chain; its full sequence is UPF0415 protein C7orf25 homolog (421 aa).

Belongs to the UPF0415 family.

In Bos taurus (Bovine), this protein is UPF0415 protein C7orf25 homolog.